We begin with the raw amino-acid sequence, 343 residues long: Dual oxidase maturation factor 1 (343 aa).

Residues 1–24 lie on the Extracellular side of the membrane; it reads MATLGHTFPFYAGPKPTFPMDTTL. A helical transmembrane segment spans residues 25–45; sequence ASIIMIFLTALATFIVILPGI. At 46–51 the chain is on the cytoplasmic side; sequence RGKTRL. A helical membrane pass occupies residues 52 to 72; the sequence is FWLLRVVTSLFIGAAILAVNF. The Extracellular segment spans residues 73–183; it reads SSEWSVGQVS…RLAGHYTSAM (111 aa). Asparagine 84, asparagine 109, and asparagine 121 each carry an N-linked (GlcNAc...) asparagine glycan. Residues 184–204 form a helical membrane-spanning segment; the sequence is LWVAFLCWLLANVMLSMPVLV. The Cytoplasmic portion of the chain corresponds to 205 to 206; that stretch reads YG. The chain crosses the membrane as a helical span at residues 207–227; the sequence is GYMLLATGIFQLLALLFFSMA. Residues 228-249 lie on the Extracellular side of the membrane; that stretch reads TSLTSPCPLHLGASVLHTHHGP. A helical transmembrane segment spans residues 250-270; it reads AFWITLTTGLLCVLLGLAMAV. Residues 271-343 lie on the Cytoplasmic side of the membrane; sequence AHRMQPHRLK…AHPKDPDCAL (73 aa). Positions 306–343 are disordered; that stretch reads RYRSMADSPKSQDIPLSEASSTKAYCKEAHPKDPDCAL. Residues 330–343 show a composition bias toward basic and acidic residues; that stretch reads YCKEAHPKDPDCAL.

This sequence belongs to the DUOXA family. As to quaternary structure, may interact with NUMB. Specifically expressed in thyroid gland. Also detected in esophagus.

It localises to the membrane. Functionally, may be required for the maturation and the transport from the endoplasmic reticulum to the plasma membrane of functional DUOX1. This Homo sapiens (Human) protein is Dual oxidase maturation factor 1 (DUOXA1).